A 190-amino-acid chain; its full sequence is MAGLMGKYAAFLTRRPVLGNMISSAVLFGTGDVIAQQLIEKKGADHDLPRTARIVTWGGILFAPTVNLWFRTLERIPIRSRWPATFARVGLDQFGFAPVILSGFFTAMTFMEGKDFNAAKVKWHESFFPTLQANWMLFIPFQILNMGLVPLQYRLLAVNAVNIPWNAFLSLQNAKGRKAEEDPVAISKKE.

Helical transmembrane passes span 16-36 (PVLG…VIAQ), 54-74 (IVTW…RTLE), 91-111 (LDQF…MTFM), and 131-151 (LQAN…LVPL).

The protein belongs to the peroxisomal membrane protein PXMP2/4 family.

Its subcellular location is the mitochondrion inner membrane. May be involved in cellular response to stress. Required to maintain mitochondrial DNA (mtDNA) integrity and stability. In Cryptococcus neoformans var. neoformans serotype D (strain B-3501A) (Filobasidiella neoformans), this protein is Protein SYM1 (SYM1).